The sequence spans 354 residues: Peptide chain release factor 1 (354 aa).

Gln230 carries the post-translational modification N5-methylglutamine.

This sequence belongs to the prokaryotic/mitochondrial release factor family. Post-translationally, methylated by PrmC. Methylation increases the termination efficiency of RF1.

The protein localises to the cytoplasm. Its function is as follows. Peptide chain release factor 1 directs the termination of translation in response to the peptide chain termination codons UAG and UAA. The protein is Peptide chain release factor 1 of Leptospira interrogans serogroup Icterohaemorrhagiae serovar copenhageni (strain Fiocruz L1-130).